The sequence spans 329 residues: Phenylalanine--tRNA ligase alpha subunit (329 aa).

The protein belongs to the class-II aminoacyl-tRNA synthetase family. Phe-tRNA synthetase alpha subunit type 1 subfamily. Tetramer of two alpha and two beta subunits. The cofactor is Mg(2+).

It localises to the cytoplasm. It catalyses the reaction tRNA(Phe) + L-phenylalanine + ATP = L-phenylalanyl-tRNA(Phe) + AMP + diphosphate + H(+). This chain is Phenylalanine--tRNA ligase alpha subunit (pheS), found in Buchnera aphidicola subsp. Acyrthosiphon pisum (strain APS) (Acyrthosiphon pisum symbiotic bacterium).